The chain runs to 299 residues: Lipoyl synthase 2 (299 aa).

Positions 45, 50, 56, 71, 75, 78, and 295 each coordinate [4Fe-4S] cluster. The Radical SAM core domain maps to 57-284; that stretch reads YASGTATFLL…KSFCSKLGFK (228 aa).

This sequence belongs to the radical SAM superfamily. Lipoyl synthase family. Requires [4Fe-4S] cluster as cofactor.

It localises to the cytoplasm. The enzyme catalyses [[Fe-S] cluster scaffold protein carrying a second [4Fe-4S](2+) cluster] + N(6)-octanoyl-L-lysyl-[protein] + 2 oxidized [2Fe-2S]-[ferredoxin] + 2 S-adenosyl-L-methionine + 4 H(+) = [[Fe-S] cluster scaffold protein] + N(6)-[(R)-dihydrolipoyl]-L-lysyl-[protein] + 4 Fe(3+) + 2 hydrogen sulfide + 2 5'-deoxyadenosine + 2 L-methionine + 2 reduced [2Fe-2S]-[ferredoxin]. Its pathway is protein modification; protein lipoylation via endogenous pathway; protein N(6)-(lipoyl)lysine from octanoyl-[acyl-carrier-protein]: step 2/2. Its function is as follows. Catalyzes the radical-mediated insertion of two sulfur atoms into the C-6 and C-8 positions of the octanoyl moiety bound to the lipoyl domains of lipoate-dependent enzymes, thereby converting the octanoylated domains into lipoylated derivatives. This Prochlorococcus marinus subsp. pastoris (strain CCMP1986 / NIES-2087 / MED4) protein is Lipoyl synthase 2.